A 185-amino-acid chain; its full sequence is ATP synthase subunit b (185 aa).

The helical transmembrane segment at 26 to 46 (LVLIGFAILLFIVIKFVVPMF) threads the bilayer.

Belongs to the ATPase B chain family. F-type ATPases have 2 components, F(1) - the catalytic core - and F(0) - the membrane proton channel. F(1) has five subunits: alpha(3), beta(3), gamma(1), delta(1), epsilon(1). F(0) has three main subunits: a(1), b(2) and c(10-14). The alpha and beta chains form an alternating ring which encloses part of the gamma chain. F(1) is attached to F(0) by a central stalk formed by the gamma and epsilon chains, while a peripheral stalk is formed by the delta and b chains.

It localises to the cell membrane. F(1)F(0) ATP synthase produces ATP from ADP in the presence of a proton or sodium gradient. F-type ATPases consist of two structural domains, F(1) containing the extramembraneous catalytic core and F(0) containing the membrane proton channel, linked together by a central stalk and a peripheral stalk. During catalysis, ATP synthesis in the catalytic domain of F(1) is coupled via a rotary mechanism of the central stalk subunits to proton translocation. In terms of biological role, component of the F(0) channel, it forms part of the peripheral stalk, linking F(1) to F(0). The polypeptide is ATP synthase subunit b (Renibacterium salmoninarum (strain ATCC 33209 / DSM 20767 / JCM 11484 / NBRC 15589 / NCIMB 2235)).